The chain runs to 172 residues: MDSQKSCIAVYPGTFDPLTNGHVSLVRRAAMIFGTVIVAVAGDSHKTPLFTLDERVAIAEQVFANDRRVLVEGFKGLLVNYVKSREANVILRGMRAVSDFEFEFQMALMNRKLDRTIETVFIMTDYKWLYISSTIVKEVAKHGGDIRGMVPEHVRERMLERFGPANGSGEGA.

Residue Thr14 participates in substrate binding. ATP is bound by residues 14–15 (TF) and His22. The substrate site is built by Lys46, Leu78, and Arg92. Residues 93-95 (GMR), Glu103, and 128-134 (WLYISST) contribute to the ATP site.

This sequence belongs to the bacterial CoaD family. Homohexamer. Mg(2+) is required as a cofactor.

The protein resides in the cytoplasm. The enzyme catalyses (R)-4'-phosphopantetheine + ATP + H(+) = 3'-dephospho-CoA + diphosphate. It participates in cofactor biosynthesis; coenzyme A biosynthesis; CoA from (R)-pantothenate: step 4/5. Reversibly transfers an adenylyl group from ATP to 4'-phosphopantetheine, yielding dephospho-CoA (dPCoA) and pyrophosphate. This chain is Phosphopantetheine adenylyltransferase, found in Solidesulfovibrio magneticus (strain ATCC 700980 / DSM 13731 / RS-1) (Desulfovibrio magneticus).